A 136-amino-acid polypeptide reads, in one-letter code: D-ribose pyranase (136 aa).

The active-site Proton donor is the histidine 20. Substrate contacts are provided by residues aspartate 28, histidine 98, and tyrosine 120–asparagine 122.

It belongs to the RbsD / FucU family. RbsD subfamily. In terms of assembly, homodecamer.

It is found in the cytoplasm. The catalysed reaction is beta-D-ribopyranose = beta-D-ribofuranose. The protein operates within carbohydrate metabolism; D-ribose degradation; D-ribose 5-phosphate from beta-D-ribopyranose: step 1/2. Functionally, catalyzes the interconversion of beta-pyran and beta-furan forms of D-ribose. The sequence is that of D-ribose pyranase from Geobacillus kaustophilus (strain HTA426).